A 964-amino-acid chain; its full sequence is Isoleucine--tRNA ligase (964 aa).

The short motif at 66–76 (PYANGDIHIGH) is the 'HIGH' region element. Glu596 serves as a coordination point for L-isoleucyl-5'-AMP. The short motif at 637–641 (KMSKS) is the 'KMSKS' region element. Lys640 is an ATP binding site. 4 residues coordinate Zn(2+): Cys927, Cys930, Cys947, and Cys950.

It belongs to the class-I aminoacyl-tRNA synthetase family. IleS type 1 subfamily. In terms of assembly, monomer. Requires Zn(2+) as cofactor.

The protein resides in the cytoplasm. The enzyme catalyses tRNA(Ile) + L-isoleucine + ATP = L-isoleucyl-tRNA(Ile) + AMP + diphosphate. Functionally, catalyzes the attachment of isoleucine to tRNA(Ile). As IleRS can inadvertently accommodate and process structurally similar amino acids such as valine, to avoid such errors it has two additional distinct tRNA(Ile)-dependent editing activities. One activity is designated as 'pretransfer' editing and involves the hydrolysis of activated Val-AMP. The other activity is designated 'posttransfer' editing and involves deacylation of mischarged Val-tRNA(Ile). This chain is Isoleucine--tRNA ligase, found in Cupriavidus necator (strain ATCC 17699 / DSM 428 / KCTC 22496 / NCIMB 10442 / H16 / Stanier 337) (Ralstonia eutropha).